We begin with the raw amino-acid sequence, 219 residues long: GPI ethanolamine phosphate transferase, stabilizing subunit (219 aa).

A run of 6 helical transmembrane segments spans residues 11–31 (YTNL…SFFV), 42–62 (TWLC…YLVV), 86–106 (CFLM…APLI), 113–133 (FLFA…LLGP), 155–175 (LQIT…PIPL), and 189–209 (TLGA…WIYW).

This sequence belongs to the PIGF family. As to quaternary structure, part of the ethanolamine phosphate transferase 3 complex composed by PIGO and PIGF. Part of the ethanolamine phosphate transferase 2 complex with PIGG. PIGF is required to stabilize PIGG and PIGO.

The protein resides in the endoplasmic reticulum membrane. It functions in the pathway glycolipid biosynthesis; glycosylphosphatidylinositol-anchor biosynthesis. Stabilizing subunit of the ethanolamine phosphate transferase 3 and ethanolamine phosphate transferase 2 complexes that sequentially transfer an ethanolamine phosphate (EtNP) from a phosphatidylethanolamine (PE) to the 6-OH position of the third alpha-1,2-linked mannose and the second alpha-1,6-linked mannose of the alpha-D-Man-(1-&gt;2)-alpha-D-Man-(1-&gt;6)-2-PEtn-alpha-D-Man-(1-&gt;4)-alpha-D-GlcN-(1-&gt;6)-(1-radyl,2-acyl-sn-glycero-3-phospho)-2-acyl-inositol (also termed H6) intermediate to generate a 6-PEtn-alpha-D-Man-(1-&gt;2)-6-PEtn-alpha-D-Man-(1-&gt;6)-2-PEtn-alpha-D-Man-(1-&gt;4)-alpha-D-GlcN-(1-&gt;6)-(1-radyl,2-acyl-sn-glycero-3-phospho)-2-acyl-inositol (also termed H8). Participates in the tenth and eleventh steps of the glycosylphosphatidylinositol-anchor biosynthesis, in association with PIGO and PIGG, respectively. The polypeptide is GPI ethanolamine phosphate transferase, stabilizing subunit (Mus musculus (Mouse)).